Reading from the N-terminus, the 364-residue chain is MQERHTEQDYRALLIADTPIIDVRAPIEFEQGAMPAAINLPLMDNDERAAVGTCYKQQGSDAALALGHKLVAGEIRQQRMYAWRAACLQNPQGILCCARGGQRSHIVQRWLHEAGIDYPLVEGGYKALRQTAIQATIELAQKPIVLIGGCTGSGKTLLVQQQPNGVDLEGLARHRGSAFGRTLQPQLSQASFENLLAAEMLKTDARQDLRLWVLEDESRMIGSNHLPECLRERMTQAAIAVVEDPFEIRLERLNEEYFLRMHHDFTHAYGDEQGWQEYCEYLHHGLSAIKRRLGLQRYNELAAQLDTALTTQLTTGSTDGHLAWLVPLLKEYYDPMYRYQLEKKAEKVVFRGEWAEVAVWVKAQ.

In terms of domain architecture, Rhodanese spans 14 to 137 (LIADTPIIDV…LRQTAIQATI (124 aa)). Cys-97 serves as the catalytic S-selanylcysteine intermediate.

The protein belongs to the SelU family. As to quaternary structure, monomer.

The enzyme catalyses 5-methylaminomethyl-2-thiouridine(34) in tRNA + selenophosphate + (2E)-geranyl diphosphate + H2O + H(+) = 5-methylaminomethyl-2-selenouridine(34) in tRNA + (2E)-thiogeraniol + phosphate + diphosphate. It catalyses the reaction 5-methylaminomethyl-2-thiouridine(34) in tRNA + (2E)-geranyl diphosphate = 5-methylaminomethyl-S-(2E)-geranyl-thiouridine(34) in tRNA + diphosphate. The catalysed reaction is 5-methylaminomethyl-S-(2E)-geranyl-thiouridine(34) in tRNA + selenophosphate + H(+) = 5-methylaminomethyl-2-(Se-phospho)selenouridine(34) in tRNA + (2E)-thiogeraniol. It carries out the reaction 5-methylaminomethyl-2-(Se-phospho)selenouridine(34) in tRNA + H2O = 5-methylaminomethyl-2-selenouridine(34) in tRNA + phosphate. In terms of biological role, involved in the post-transcriptional modification of the uridine at the wobble position (U34) of tRNA(Lys), tRNA(Glu) and tRNA(Gln). Catalyzes the conversion of 2-thiouridine (S2U-RNA) to 2-selenouridine (Se2U-RNA). Acts in a two-step process involving geranylation of 2-thiouridine (S2U) to S-geranyl-2-thiouridine (geS2U) and subsequent selenation of the latter derivative to 2-selenouridine (Se2U) in the tRNA chain. This Shigella flexneri serotype 5b (strain 8401) protein is tRNA 2-selenouridine synthase.